The following is a 356-amino-acid chain: Heat-inducible transcription repressor HrcA (356 aa).

It belongs to the HrcA family.

In terms of biological role, negative regulator of class I heat shock genes (grpE-dnaK-dnaJ and groELS operons). Prevents heat-shock induction of these operons. In Bartonella tribocorum (strain CIP 105476 / IBS 506), this protein is Heat-inducible transcription repressor HrcA.